A 581-amino-acid chain; its full sequence is Estrogen receptor (581 aa).

The modulating stretch occupies residues 1–144; that stretch reads MYPEDSRGSG…GFEIAKEMRF (144 aa). 2 disordered regions span residues 45 to 66 and 96 to 122; these read APLDAHGPPSDGSLQSLGSGPN and PVYRSSVPSSQQSVSREDQCGTSDDSY. The segment covering 56-66 has biased composition (polar residues); the sequence is GSLQSLGSGPN. Residues 100 to 109 show a composition bias toward low complexity; it reads SSVPSSQQSV. 2 consecutive NR C4-type zinc fingers follow at residues 145–165 and 181–205; these read CAVCSDYASGYHYGVWSCEGC and CPATNQCTIDRNRRKSCQACRLRKC. The segment at residues 145-210 is a DNA-binding region (nuclear receptor); that stretch reads CAVCSDYASG…RLRKCYEVGM (66 aa). Positions 211 to 272 are hinge; it reads MKGGMRKDRG…GGGKSSMISM (62 aa). Residues 216–246 show a composition bias toward basic and acidic residues; sequence RKDRGRVLRRDKQRTGTSDRDKASKGLEHRT. Residues 216–268 form a disordered region; sequence RKDRGRVLRRDKQRTGTSDRDKASKGLEHRTAPPQDRRKHISSSAGGGGGKSS. In terms of domain architecture, NR LBD spans 273–509; that stretch reads PPDQVLLLLQ…DLLLEMLDAH (237 aa). Residues 516–528 show a composition bias toward basic and acidic residues; that stretch reads RPAETWSQADREP. The disordered stretch occupies residues 516–581; sequence RPAETWSQAD…GSRSECTHIL (66 aa). A compositionally biased stretch (gly residues) spans 536–547; the sequence is SGGGGGGGGGSS.

Belongs to the nuclear hormone receptor family. NR3 subfamily. As to quaternary structure, binds DNA as a homodimer. Can form a heterodimer with ER-beta.

It localises to the nucleus. Its function is as follows. The steroid hormones and their receptors are involved in the regulation of eukaryotic gene expression and affect cellular proliferation and differentiation in target tissues. In Pagrus major (Red sea bream), this protein is Estrogen receptor (esr1).